We begin with the raw amino-acid sequence, 196 residues long: Putative 3-methyladenine DNA glycosylase (196 aa).

The protein belongs to the DNA glycosylase MPG family.

The protein is Putative 3-methyladenine DNA glycosylase of Chlorobium phaeobacteroides (strain DSM 266 / SMG 266 / 2430).